Reading from the N-terminus, the 109-residue chain is Cytochrome c-550 (109 aa).

Residues cysteine 13, cysteine 16, histidine 17, and methionine 79 each contribute to the heme c site.

Binds 1 heme c group covalently per subunit.

The chain is Cytochrome c-550 from Nitrobacter winogradskyi (Nitrobacter agilis).